We begin with the raw amino-acid sequence, 161 residues long: Anaerobic nitrite reductase Glb1-1 (161 aa).

Positions 8-157 constitute a Globin domain; it reads CFTEEQEALV…LVGAIKSEMK (150 aa). Residues 41-45 carry the Homodimerization motif; that stretch reads EIAPS. Residues S51, K65, H69, K99, T103, and H104 each contribute to the heme b site. Residues 111 to 123 carry the Homodimerization motif; that stretch reads NEHFEVTKFALLD.

It belongs to the plant globin family. In terms of assembly, homodimer. The cofactor is heme b. Mainly expressed in root nodules, and, to a lower extent, in leaves, roots, stems, flowers and fruits. Accumulates in mature root nodules.

It catalyses the reaction Fe(III)-heme b-[protein] + nitric oxide + H2O = Fe(II)-heme b-[protein] + nitrite + 2 H(+). Phytoglobin that reduces nitrite to nitric oxide (NO) under anoxic conditions (e.g. during flooding or in waterlogged soil) and upon root nodulation. Required for general plant development and during nodulation, especially for the onset of symbiosis. Monitors nitric oxide (NO) levels during early phase of the nitrogen-fixing symbiosis and buffers oxygen in functioning nodules. May not function as an oxygen storage or transport protein. Has an unusually high affinity for O(2) through a hexacoordinate heme iron because of a very low dissociation constant. This is Anaerobic nitrite reductase Glb1-1 from Lotus japonicus (Lotus corniculatus var. japonicus).